The primary structure comprises 392 residues: 6-aminohexanoate-dimer hydrolase (392 aa).

Residues 1–22 (MNARSTGQHPARYPGAAAGEPT) are disordered. Residue serine 112 is part of the active site.

The enzyme catalyses [N-(6-aminohexanoyl)](n) + H2O = [N-(6-aminohexanoyl)](n-1) + 6-aminohexanoate. It catalyses the reaction N-(6-aminohexanoyl)-6-aminohexanoate + H2O = 2 6-aminohexanoate. The protein operates within xenobiotic degradation; nylon-6 oligomer degradation. Functionally, involved in nylon oligomer degradation. This is 6-aminohexanoate-dimer hydrolase from Paenarthrobacter ureafaciens.